A 267-amino-acid chain; its full sequence is Thiamine thiazole synthase (267 aa).

NAD(+) is bound by residues S41, 60–61 (ER), G68, V132, and 160–162 (HVD). Fe cation-binding residues include D162 and H177. M227 is an NAD(+) binding site. Residue R237 coordinates glycine.

This sequence belongs to the THI4 family. Homooctamer; tetramer of dimers. Fe(2+) serves as cofactor.

It carries out the reaction hydrogen sulfide + glycine + NAD(+) = ADP-5-ethyl-4-methylthiazole-2-carboxylate + nicotinamide + 3 H2O + H(+). It participates in cofactor biosynthesis; thiamine diphosphate biosynthesis. In terms of biological role, involved in the biosynthesis of the thiazole moiety of thiamine. Catalyzes the conversion of NAD and glycine to adenosine diphosphate 5-(2-hydroxyethyl)-4-methylthiazole-2-carboxylate (ADT), an adenylated thiazole intermediate, using free sulfide as a source of sulfur. The polypeptide is Thiamine thiazole synthase (Saccharolobus islandicus (strain L.S.2.15 / Lassen #1) (Sulfolobus islandicus)).